Consider the following 312-residue polypeptide: Olfactory receptor-like protein COR5 (312 aa).

Residues 1–26 (MALGNCTTPTTFILSGLTDNPRLQMP) lie on the Extracellular side of the membrane. N-linked (GlcNAc...) asparagine glycosylation occurs at Asn-5. The helical transmembrane segment at 27-49 (LFMVFLAIYTITLLANLGLIALI) threads the bilayer. At 50–57 (SVDFHLQT) the chain is on the cytoplasmic side. The helical transmembrane segment at 58-79 (PMYIFLQNLSFTDAAYSTVITP) threads the bilayer. The Extracellular segment spans residues 80-100 (KMLATFLEERRTISYVGCILQ). An intrachain disulfide couples Cys-97 to Cys-179. Residues 101–120 (YFSFVLLTSSECLLLAVMAY) traverse the membrane as a helical segment. The Cytoplasmic portion of the chain corresponds to 121 to 139 (DRYVAICKPLLYPAIMTKA). A helical membrane pass occupies residues 140–164 (VCWRLVEGLYSLAFLNSLVHTSGLL). Topologically, residues 165-205 (KLSFCSSNVVNHFFCDNSPLFQISSSSTTLNELLVFIFGSW) are extracellular. Residues 206–226 (FAMSSIITTPISYVFIILTVV) form a helical membrane-spanning segment. At 227-239 (RIRSKDGKYKAFS) the chain is on the cytoplasmic side. A helical transmembrane segment spans residues 240-260 (TCTSHLMAVSLFHGTVIFMYL). Residues 261 to 271 (RPVKLFSLDTD) lie on the Extracellular side of the membrane. Residues 272-292 (KIASLFYTVVIPMLNPLIYSW) traverse the membrane as a helical segment. At 293 to 312 (RNKEVKDALRRVIATNVWIH) the chain is on the cytoplasmic side.

It belongs to the G-protein coupled receptor 1 family.

The protein resides in the cell membrane. In terms of biological role, odorant receptor. The polypeptide is Olfactory receptor-like protein COR5 (COR5) (Gallus gallus (Chicken)).